A 616-amino-acid chain; its full sequence is Zinc metalloproteinase-disintegrin-like VLAIP-A (616 aa).

Residues 1 to 20 form the signal peptide; it reads MMQVLLVTISLAVFPYQGSS. Residues 21-194 constitute a propeptide that is removed on maturation; sequence IILESGNVND…KASQLNLTPE (174 aa). At Gln195 the chain carries Pyrrolidone carboxylic acid. A Peptidase M12B domain is found at 203-399; the sequence is KYIKLVIVAD…KMPQCILNKP (197 aa). Intrachain disulfides connect Cys314–Cys394, Cys354–Cys378, and Cys356–Cys361. Residue His339 coordinates Zn(2+). Glu340 is a catalytic residue. Positions 343 and 349 each coordinate Zn(2+). An N-linked (GlcNAc...) asparagine glycan is attached at Asn377. Residues 407–493 enclose the Disintegrin domain; it reads PAVCGNYLVE…ECPTDQFQRN (87 aa). Positions 409, 412, 414, 416, 419, and 422 each coordinate Ca(2+). 14 cysteine pairs are disulfide-bonded: Cys410–Cys439, Cys421–Cys434, Cys423–Cys429, Cys433–Cys456, Cys447–Cys453, Cys452–Cys478, Cys465–Cys485, Cys472–Cys504, Cys497–Cys509, Cys516–Cys566, Cys531–Cys577, Cys544–Cys554, Cys561–Cys603, and Cys597–Cys609. The short motif at 471–473 is the D/ECD-tripeptide element; the sequence is ECD.

Belongs to the venom metalloproteinase (M12B) family. P-III subfamily. P-IIIc sub-subfamily. Heterodimer; disulfide-linked. Zn(2+) is required as a cofactor. In terms of processing, the N-terminus is blocked. Expressed by the venom gland.

The protein localises to the secreted. Its activity is regulated as follows. Inhibited by EDTA or 1,10-phenanthroline. Not inhibited by PMSF. Its function is as follows. Snake venom zinc metalloprotease that hydrolyzes the alpha-chain (FGA) and more slowly the beta-chain (FGB) of fibrinogen, without affecting the gamma-chain. Cleaves alpha-chain of fibrinogen at '432-Lys-|-Leu-433' and '535-Pro-|-Met-536' bonds. Induces apoptosis in vascular endothelial cells and inhibits endothelial cell adhesion to extracellular matrix proteins such as fibrinogen, fibronectin, vitronectin, collagen I, and collagen IV. Also hydrolyzes azocasein, and insulin B-chain (at the '38-Ala-|-Leu-39' bond). The chain is Zinc metalloproteinase-disintegrin-like VLAIP-A from Macrovipera lebetinus (Levantine viper).